A 255-amino-acid polypeptide reads, in one-letter code: Phosphate import ATP-binding protein PstB (255 aa).

The ABC transporter domain occupies 10–250; it reads INIKDLNLWY…PQMKSTEDYI (241 aa). 42 to 49 contributes to the ATP binding site; the sequence is GPSGCGKS.

Belongs to the ABC transporter superfamily. Phosphate importer (TC 3.A.1.7) family. The complex is composed of two ATP-binding proteins (PstB), two transmembrane proteins (PstC and PstA) and a solute-binding protein (PstS).

It localises to the cell membrane. It carries out the reaction phosphate(out) + ATP + H2O = ADP + 2 phosphate(in) + H(+). Functionally, part of the ABC transporter complex PstSACB involved in phosphate import. Responsible for energy coupling to the transport system. This Methanococcoides burtonii (strain DSM 6242 / NBRC 107633 / OCM 468 / ACE-M) protein is Phosphate import ATP-binding protein PstB.